A 481-amino-acid chain; its full sequence is tRNA-2-methylthio-N(6)-dimethylallyladenosine synthase (481 aa).

Residues 24 to 140 (KKLFIESYGC…LPNLLNEVEE (117 aa)) enclose the MTTase N-terminal domain. 6 residues coordinate [4Fe-4S] cluster: cysteine 33, cysteine 69, cysteine 103, cysteine 178, cysteine 182, and cysteine 185. Positions 164–411 (MSNGITALVA…DLQQKHAWWR (248 aa)) constitute a Radical SAM core domain. A TRAM domain is found at 413–476 (EDFIGQTVEV…SGTLKGEAVG (64 aa)).

Belongs to the methylthiotransferase family. MiaB subfamily. In terms of assembly, monomer. The cofactor is [4Fe-4S] cluster.

It localises to the cytoplasm. The enzyme catalyses N(6)-dimethylallyladenosine(37) in tRNA + (sulfur carrier)-SH + AH2 + 2 S-adenosyl-L-methionine = 2-methylsulfanyl-N(6)-dimethylallyladenosine(37) in tRNA + (sulfur carrier)-H + 5'-deoxyadenosine + L-methionine + A + S-adenosyl-L-homocysteine + 2 H(+). Catalyzes the methylthiolation of N6-(dimethylallyl)adenosine (i(6)A), leading to the formation of 2-methylthio-N6-(dimethylallyl)adenosine (ms(2)i(6)A) at position 37 in tRNAs that read codons beginning with uridine. In Flavobacterium psychrophilum (strain ATCC 49511 / DSM 21280 / CIP 103535 / JIP02/86), this protein is tRNA-2-methylthio-N(6)-dimethylallyladenosine synthase.